The sequence spans 97 residues: uncharacterized protein (97 aa).

This is an uncharacterized protein from Enterobacteria phage T4 (Bacteriophage T4).